Reading from the N-terminus, the 230-residue chain is Ribosomal RNA large subunit methyltransferase E (230 aa).

S-adenosyl-L-methionine contacts are provided by G76, W78, D99, D115, and D139. Catalysis depends on K179, which acts as the Proton acceptor.

This sequence belongs to the class I-like SAM-binding methyltransferase superfamily. RNA methyltransferase RlmE family.

It is found in the cytoplasm. The enzyme catalyses uridine(2552) in 23S rRNA + S-adenosyl-L-methionine = 2'-O-methyluridine(2552) in 23S rRNA + S-adenosyl-L-homocysteine + H(+). Functionally, specifically methylates the uridine in position 2552 of 23S rRNA at the 2'-O position of the ribose in the fully assembled 50S ribosomal subunit. The protein is Ribosomal RNA large subunit methyltransferase E of Nitrobacter winogradskyi (strain ATCC 25391 / DSM 10237 / CIP 104748 / NCIMB 11846 / Nb-255).